A 360-amino-acid chain; its full sequence is Probable L-asparaginase 1 (360 aa).

Positions 1 to 16 (MWRSIISFLFFSVALC) are cleaved as a signal peptide. N-linked (GlcNAc...) asparagine glycans are attached at residues Asn27, Asn35, and Asn40. An Asparaginase/glutaminase domain is found at 39–359 (PNVTIFAMGG…QNITDIFSLE (321 aa)). The O-isoaspartyl threonine intermediate role is filled by Thr49. Residue Asn82 is glycosylated (N-linked (GlcNAc...) asparagine). Ser96 is a binding site for substrate. An N-linked (GlcNAc...) asparagine glycan is attached at Asn106. 129–130 (TD) provides a ligand contact to substrate. Asn144, Asn179, Asn246, Asn302, and Asn351 each carry an N-linked (GlcNAc...) asparagine glycan.

The protein belongs to the asparaginase 1 family.

It localises to the secreted. The protein localises to the cell wall. The catalysed reaction is L-asparagine + H2O = L-aspartate + NH4(+). This Schizosaccharomyces pombe (strain 972 / ATCC 24843) (Fission yeast) protein is Probable L-asparaginase 1.